A 491-amino-acid chain; its full sequence is Probable glycogen synthase 2 (491 aa).

Lys-15 contributes to the ADP-alpha-D-glucose binding site.

The protein belongs to the glycosyltransferase 1 family. Bacterial/plant glycogen synthase subfamily.

It catalyses the reaction [(1-&gt;4)-alpha-D-glucosyl](n) + ADP-alpha-D-glucose = [(1-&gt;4)-alpha-D-glucosyl](n+1) + ADP + H(+). It functions in the pathway glycan biosynthesis; glycogen biosynthesis. Synthesizes alpha-1,4-glucan chains using ADP-glucose. This chain is Probable glycogen synthase 2 (glgA2), found in Synechocystis sp. (strain ATCC 27184 / PCC 6803 / Kazusa).